Reading from the N-terminus, the 1025-residue chain is Exportin-T (1025 aa).

It belongs to the exportin family.

It is found in the nucleus. The protein localises to the cytoplasm. Functionally, tRNA nucleus export receptor which facilitates tRNA translocation across the nuclear pore complex. Involved in pre-tRNA splicing, probably by affecting the interaction of pre-tRNA with splicing endonuclease. This chain is Exportin-T (LOS1), found in Candida albicans (strain SC5314 / ATCC MYA-2876) (Yeast).